A 266-amino-acid polypeptide reads, in one-letter code: Coiled-coil domain-containing glutamate-rich protein 2 (266 aa).

A signal peptide spans 1–23; it reads MPPRGPASELLLLRLLLLGAATA. 4 stretches are compositionally biased toward basic and acidic residues: residues 90-100, 154-188, 204-213, and 221-266; these read EAGKMRSSQEV, LWQR…EKGV, GGGERREDLP, and QPEA…RREG. The interval 90–266 is disordered; that stretch reads EAGKMRSSQE…TLGEQLRREG (177 aa).

Expressed at higher levels in fetal brain and skeletal muscle. Lower expression is detected in fetal kidney, liver, spleen, thymus, heart and lung.

The protein resides in the secreted. The polypeptide is Coiled-coil domain-containing glutamate-rich protein 2 (CCER2) (Homo sapiens (Human)).